The primary structure comprises 658 residues: Cysteine-rich receptor-like protein kinase 36 (658 aa).

An N-terminal signal peptide occupies residues 1 to 26 (MERSNLFHIPCFLLLFLLFNINGVHT). Gnk2-homologous domains are found at residues 27–128 (TFVC…NIHR) and 139–246 (NVPH…DYRF). Topologically, residues 27-281 (TFVCGDEDFS…KKGRMFQPWS (255 aa)) are extracellular. N-linked (GlcNAc...) asparagine glycans are attached at residues N38, N64, N116, N150, and N163. The helical transmembrane segment at 282 to 302 (VVVVVFPTGINLAVFVAFVLA) threads the bilayer. The Cytoplasmic portion of the chain corresponds to 303–658 (YRRMRRRIYT…EVSITVLYPR (356 aa)). Positions 340-612 (FSLENKLGQG…ITWLARDGTF (273 aa)) constitute a Protein kinase domain. Residues 346 to 354 (LGQGGFGSV) and K368 contribute to the ATP site. Y413 is subject to Phosphotyrosine. The Proton acceptor role is filled by D465. Position 469 is a phosphoserine (S469). T505 carries the phosphothreonine modification. Position 513 is a phosphotyrosine (Y513).

The protein belongs to the protein kinase superfamily. Ser/Thr protein kinase family. CRK subfamily. As to quaternary structure, interacts with CRK45. Post-translationally, autophosphorylated.

Its subcellular location is the cell membrane. The catalysed reaction is L-seryl-[protein] + ATP = O-phospho-L-seryl-[protein] + ADP + H(+). It carries out the reaction L-threonyl-[protein] + ATP = O-phospho-L-threonyl-[protein] + ADP + H(+). In terms of biological role, forms a complex with CRK45 that may negatively control abscisic acid (ABA) and osmotic stress signal transduction. Can phosphorylate CRK45 in vitro. The protein is Cysteine-rich receptor-like protein kinase 36 of Arabidopsis thaliana (Mouse-ear cress).